The chain runs to 662 residues: MEGALTARQIVNEGDSSLATELQEEPEESPGPVVDENIVSAKKQGQSTHNWSGDWSFWISSSTYKDRNEEYRQQFTHLPDSEKLIADYACALQKDILVQGRLYLSEKWLCFYSNIFRWETTISIALKNITFMTKEKTARLIPNAIQIITEGEKFFFTSFGARDRSYLIIFRLWQNVLLDKSLTRQEFWQLLQQNYGTELGLNAEEMEHLLSVEENVQPRSPGRSSVDDAGERDEKFSKAVSFTQESVSRASETEPLDGNSPKRGLGKEDSQSERNVRKSPSLASEKRISRAPSKSLDLNKNEYLSLDKSSTSDSVDEENIPEKDLQGRLYINRVFHISAERMFELLFTSSHFMQRFANSRNIIDVVSTPWTVESGGNQLRTMTYTIVLSNPLTGKYTAATEKQTLYKESREAQFYLVDSEVLTHDVPYHDYFYTLNRYCIVRSAKQRCRLRVSTDLKYRKQPWGLIKSLIEKNSWSSLESYFKKLESDLLMEESVLSQSIEDAGKHSSLRRRRRTLNRTAEPVPKLSSQRSSTDLGFEAKVDVTGKRKTVDSYDTALIVVMSIFLLLLVLLNVTLFLKLSKIEHATQSFYQLHLQGEKSLNLVSDRFSRTENIQKNKDQAHRLKGVLQDSIVMLEQLKSSLIMLQKTFDLLNKNKSGVAVES.

A disordered region spans residues 1–33; the sequence is MEGALTARQIVNEGDSSLATELQEEPEESPGPV. Residues 70-176 form the GRAM domain; it reads EYRQQFTHLP…LIIFRLWQNV (107 aa). Residues 212–294 form a disordered region; the sequence is VEENVQPRSP…EKRISRAPSK (83 aa). A compositionally biased stretch (polar residues) spans 240-250; that stretch reads VSFTQESVSRA. Basic and acidic residues predominate over residues 265–276; it reads LGKEDSQSERNV. Residues 326–497 enclose the VASt domain; sequence QGRLYINRVF…DLLMEESVLS (172 aa). The segment at 506 to 530 is disordered; it reads HSSLRRRRRTLNRTAEPVPKLSSQR. The segment covering 507 to 516 has biased composition (basic residues); the sequence is SSLRRRRRTL. Residues 557–577 traverse the membrane as a helical segment; it reads LIVVMSIFLLLLVLLNVTLFL.

As to expression, highly expressed in the liver. Also found in the testis.

It is found in the endoplasmic reticulum membrane. Its subcellular location is the cell membrane. Cholesterol transporter that mediates non-vesicular transport of cholesterol from the plasma membrane (PM) to the endoplasmic reticulum (ER). Contains unique domains for binding cholesterol and the PM, thereby serving as a molecular bridge for the transfer of cholesterol from the PM to the ER. Plays a crucial role in cholesterol homeostasis and has the unique ability to localize to the PM based on the level of membrane cholesterol. In lipid-poor conditions localizes to the ER membrane and in response to excess cholesterol in the PM is recruited to the endoplasmic reticulum-plasma membrane contact sites (EPCS) which is mediated by the GRAM domain. At the EPCS, the sterol-binding VASt/ASTER domain binds to the cholesterol in the PM and facilitates its transfer from the PM to ER. This is Protein Aster-C (Gramd1c) from Mus musculus (Mouse).